Here is a 108-residue protein sequence, read N- to C-terminus: L-rhamnose mutarotase (108 aa).

Y19 is a binding site for substrate. The active-site Proton donor is the H23. Residues Y45 and W80–W81 contribute to the substrate site.

The protein belongs to the rhamnose mutarotase family. As to quaternary structure, homodimer.

It is found in the cytoplasm. It catalyses the reaction alpha-L-rhamnose = beta-L-rhamnose. It participates in carbohydrate metabolism; L-rhamnose metabolism. In terms of biological role, involved in the anomeric conversion of L-rhamnose. This Ligilactobacillus salivarius (strain UCC118) (Lactobacillus salivarius) protein is L-rhamnose mutarotase.